A 1075-amino-acid polypeptide reads, in one-letter code: mRNA-binding protein PUF2 (1075 aa).

The tract at residues 38–68 is disordered; sequence NTNARSVRVSDKRGRSSSTSPQKIGSYRTRA. Ser-72 is subject to Phosphoserine. Positions 93–105 are enriched in low complexity; sequence TPVVVVPPTSSTP. The segment at 93 to 112 is disordered; it reads TPVVVVPPTSSTPDSLNSTT. Ser-198 is modified (phosphoserine). The region spanning 316-402 is the RRM domain; sequence NTISISNVFP…APSTVSFARV (87 aa). In terms of domain architecture, PUM-HD spans 511 to 872; that stretch reads ELNHLLQNAL…QLLEEVGLSS (362 aa). 6 Pumilio repeats span residues 574-611, 612-647, 649-683, 684-719, 722-758, and 760-800; these read AIVM…IMLR, KCNK…NLVT, GVSD…FIFE, SVLS…QLLT, SLII…LILC, and KLVN…KIIH. 2 positions are modified to phosphoserine: Ser-872 and Ser-876. Disordered stretches follow at residues 874–931 and 997–1075; these read GISP…LNFN and NNYN…SYGY. 3 stretches are compositionally biased toward low complexity: residues 901–916, 997–1009, and 1018–1063; these read VSVS…HNSV, NNYN…SQMN, and NNNN…NNNN.

The protein resides in the cytoplasm. RNA-binding protein involved in post-transcriptional regulation. Negatively regulates expression of COX17 by binding to the 3'-UTR of COX17 mRNA. Promotes decay of COX17 mRNA by enhancing its rate of deadenylation and subsequent turnover. Predominantly binds to mRNAs encoding membrane-associated proteins with roles in transmembrane transport and vesicular trafficking. The protein is mRNA-binding protein PUF2 (PUF2) of Saccharomyces cerevisiae (strain ATCC 204508 / S288c) (Baker's yeast).